The chain runs to 539 residues: uncharacterized protein (539 aa).

Positions 34–63 (AASEVSPIPQERPTTSLRKPTPRVQRPATD) are disordered. Helical transmembrane passes span 103-123 (FATP…TTVF), 141-161 (MTAT…LDTV), 184-204 (ILLL…GILL), 244-264 (GIFH…IFLN), 277-299 (FLGA…IIYI), 325-345 (LAVP…LVTF), 360-380 (VLST…AAAA), 399-419 (THVS…ILFL), 434-454 (VVAL…ADNT), 470-490 (IGGV…AIIL), and 496-516 (WGLY…AGVE).

It belongs to the multi antimicrobial extrusion (MATE) (TC 2.A.66.1) family.

It is found in the vacuole membrane. This is an uncharacterized protein from Schizosaccharomyces pombe (strain 972 / ATCC 24843) (Fission yeast).